The sequence spans 518 residues: D-aminopeptidase (518 aa).

The active-site Nucleophile is serine 62. Lysine 65 functions as the Proton donor/acceptor in the catalytic mechanism. Positions 477-487 (QRSMDAPSPGE) are important for specificity. Substrate is bound at residue aspartate 481.

It belongs to the peptidase S12 family. Homodimer.

The enzyme catalyses Release of an N-terminal D-amino acid from a peptide, Xaa-|-Yaa-, in which Xaa is preferably D-Ala, D-Ser or D-Thr. D-amino acid amides and methyl esters also are hydrolyzed, as is glycine amide.. With respect to regulation, inhibited by beta-lactam compounds such as 6-aminopenicillic acid, 7-aminocephalosporanic acid, benzylpenicillin and ampicillin. Inhibited by p-chloromercuribenzoate. Hydrolyzes N-terminal residues in D-amino acid-containing peptides. The protein is D-aminopeptidase of Brucella ovis (strain ATCC 25840 / 63/290 / NCTC 10512).